The sequence spans 249 residues: Glucosamine-6-phosphate deaminase (249 aa).

Aspartate 67 functions as the Proton acceptor; for enolization step in the catalytic mechanism. The active-site For ring-opening step is asparagine 136. The Proton acceptor; for ring-opening step role is filled by histidine 138. The active-site For ring-opening step is the glutamate 143.

Belongs to the glucosamine/galactosamine-6-phosphate isomerase family. NagB subfamily.

The enzyme catalyses alpha-D-glucosamine 6-phosphate + H2O = beta-D-fructose 6-phosphate + NH4(+). Its pathway is amino-sugar metabolism; N-acetylneuraminate degradation; D-fructose 6-phosphate from N-acetylneuraminate: step 5/5. Functionally, catalyzes the reversible isomerization-deamination of glucosamine 6-phosphate (GlcN6P) to form fructose 6-phosphate (Fru6P) and ammonium ion. The protein is Glucosamine-6-phosphate deaminase of Clostridium botulinum (strain Eklund 17B / Type B).